Here is a 129-residue protein sequence, read N- to C-terminus: Iron-sulfur cluster assembly 1 homolog, mitochondrial (129 aa).

Residues 1–12 (MASSVVRATVRA) constitute a mitochondrion transit peptide. Fe cation-binding residues include Cys-57, Cys-121, and Cys-123.

The protein belongs to the HesB/IscA family.

It is found in the mitochondrion. In terms of biological role, involved in the maturation of mitochondrial 4Fe-4S proteins functioning late in the iron-sulfur cluster assembly pathway. Probably involved in the binding of an intermediate of Fe/S cluster assembly. The sequence is that of Iron-sulfur cluster assembly 1 homolog, mitochondrial (ISCA1) from Gallus gallus (Chicken).